We begin with the raw amino-acid sequence, 426 residues long: Endothelin-1 receptor (426 aa).

A signal peptide spans 1 to 20; sequence METFCLKVTFWVALVGYVIG. Residues 21–79 are Extracellular-facing; that stretch reads DHPESYSTNLSTPVDFTTFHGTELSFLVTTHRPTNLALPSNGSMHSYCPQQTKITSAFK. N-linked (GlcNAc...) asparagine glycans are attached at residues Asn29 and Asn61. Residues 80–101 form a helical membrane-spanning segment; that stretch reads YINTVISCTIFIVGMVGNATLL. Topologically, residues 102–111 are cytoplasmic; sequence RIIYQNKCMR. The chain crosses the membrane as a helical span at residues 112-131; the sequence is NGPNALIASLALGDLIYVVI. The Extracellular segment spans residues 132 to 158; that stretch reads DLPINVFKLLAGRWPFDHNDFGVFLCK. Cysteines 157 and 238 form a disulfide. A helical membrane pass occupies residues 159 to 180; that stretch reads LFPFLQKSSVGITVLNLCALSV. Residues 181-204 are Cytoplasmic-facing; it reads DRYRAVASWSRVQGIGIPLITAIE. Residues 205–228 traverse the membrane as a helical segment; sequence IVSIWILSFILAIPEAIGFVMVPF. The Extracellular segment spans residues 229 to 255; it reads EYKGEQHKTCMLNATSKFMEFYQDVKD. N-linked (GlcNAc...) asparagine glycosylation occurs at Asn241. A helical membrane pass occupies residues 256–277; that stretch reads WWLFGFYFCMPLVCTAIFYTLM. The Cytoplasmic portion of the chain corresponds to 278-305; sequence TCEMLNRRNGSLRIALSEHLKQRREVAK. A helical membrane pass occupies residues 306-327; it reads TVFCLVVIFALCWFPLHLSRIL. At 328–346 the chain is on the extracellular side; the sequence is KKTVYDEMDKNRCELLSFL. A helical membrane pass occupies residues 347–371; it reads RLMDYIGINLATMNSCINPIALYFV. Topologically, residues 372-426 are cytoplasmic; sequence SKKFKNCFQSCLCCCCYQSKSLMTSVPMNGTSIQWKNHEQNNHNTERSSHKDSIN. Residue Ser424 is modified to Phosphoserine.

It belongs to the G-protein coupled receptor 1 family. Endothelin receptor subfamily. EDNRA sub-subfamily. As to quaternary structure, interacts with HDAC7 and KAT5.

It localises to the cell membrane. Receptor for endothelin-1. Mediates its action by association with G proteins that activate a phosphatidylinositol-calcium second messenger system. The rank order of binding affinities for ET-A is: ET1 &gt; ET2 &gt;&gt; ET3. The polypeptide is Endothelin-1 receptor (Canis lupus familiaris (Dog)).